We begin with the raw amino-acid sequence, 443 residues long: Thymidine phosphorylase (443 aa).

This sequence belongs to the thymidine/pyrimidine-nucleoside phosphorylase family. In terms of assembly, homodimer.

It catalyses the reaction thymidine + phosphate = 2-deoxy-alpha-D-ribose 1-phosphate + thymine. It participates in pyrimidine metabolism; dTMP biosynthesis via salvage pathway; dTMP from thymine: step 1/2. Its function is as follows. The enzymes which catalyze the reversible phosphorolysis of pyrimidine nucleosides are involved in the degradation of these compounds and in their utilization as carbon and energy sources, or in the rescue of pyrimidine bases for nucleotide synthesis. This is Thymidine phosphorylase from Shewanella pealeana (strain ATCC 700345 / ANG-SQ1).